We begin with the raw amino-acid sequence, 139 residues long: Mitochondrial intermembrane space import and assembly protein 40 (139 aa).

3 cysteine pairs are disulfide-bonded: cysteine 53/cysteine 55, cysteine 64/cysteine 97, and cysteine 74/cysteine 87. Residues serine 61–tyrosine 105 form the CHCH domain. Short sequence motifs (cx9C motif) lie at residues cysteine 64–cysteine 74 and cysteine 87–cysteine 97. The tract at residues proline 102–serine 139 is disordered. The span at proline 106–threonine 124 shows a compositional bias: acidic residues.

In terms of assembly, monomer. Can form homooligomers. Interacts with GFER and forms transient disulfide bonds with GFER. Interacts with MICU1. Interacts with COX19 forming transient intermolecular disulfide bridges. Interacts with COA7 through transient intermolecular disulfide bonds. Interacts with AIFM1; the interaction increases in presence of NADH. Interacts with NDUFB10. In terms of processing, forms intrachain disulfide bridges, but exists in different redox states. In terms of tissue distribution, widely expressed. Present at high level in liver and kidney, followed by lung, brain, heart and spleen (at protein level).

The protein resides in the mitochondrion intermembrane space. Functionally, central component of a redox-sensitive mitochondrial intermembrane space import machinery which is required for the biogenesis of respiratory chain complexes. Functions as chaperone and catalyzes the formation of disulfide bonds in substrate proteins, such as COX17, COX19, MICU1 and COA7. Required for the import and folding of small cysteine-containing proteins (small Tim) in the mitochondrial intermembrane space (IMS). Required for the import of COA7 in the IMS. Precursor proteins to be imported into the IMS are translocated in their reduced form into the mitochondria. The oxidized form of CHCHD4/MIA40 forms a transient intermolecular disulfide bridge with the reduced precursor protein, resulting in oxidation of the precursor protein that now contains an intramolecular disulfide bond and is able to undergo folding in the IMS. Reduced CHCHD4/MIA40 is then reoxidized by GFER/ERV1 via a disulfide relay system. Mediates formation of disulfide bond in MICU1 in the IMS, promoting formation of the MICU1-MICU2 heterodimer that regulates mitochondrial calcium uptake. The chain is Mitochondrial intermembrane space import and assembly protein 40 (Chchd4) from Mus musculus (Mouse).